We begin with the raw amino-acid sequence, 99 residues long: Large ribosomal subunit protein bL28 (99 aa).

It belongs to the bacterial ribosomal protein bL28 family.

In Caulobacter vibrioides (strain ATCC 19089 / CIP 103742 / CB 15) (Caulobacter crescentus), this protein is Large ribosomal subunit protein bL28.